The chain runs to 517 residues: Glycerol kinase (517 aa).

Residue Thr-24 participates in ADP binding. ATP-binding residues include Thr-24, Thr-25, and Ser-26. Thr-24 contacts sn-glycerol 3-phosphate. Arg-28 provides a ligand contact to ADP. Positions 94, 95, 146, and 261 each coordinate sn-glycerol 3-phosphate. Glycerol-binding residues include Arg-94, Glu-95, Tyr-146, Asp-261, and Gln-262. ADP contacts are provided by Thr-283 and Gly-327. Residues Thr-283, Gly-327, Gln-331, and Gly-428 each contribute to the ATP site. 2 residues coordinate ADP: Gly-428 and Asn-432.

This sequence belongs to the FGGY kinase family.

The enzyme catalyses glycerol + ATP = sn-glycerol 3-phosphate + ADP + H(+). It functions in the pathway polyol metabolism; glycerol degradation via glycerol kinase pathway; sn-glycerol 3-phosphate from glycerol: step 1/1. Its activity is regulated as follows. Inhibited by fructose 1,6-bisphosphate (FBP). Functionally, key enzyme in the regulation of glycerol uptake and metabolism. Catalyzes the phosphorylation of glycerol to yield sn-glycerol 3-phosphate. In Mycobacterium tuberculosis (strain ATCC 25177 / H37Ra), this protein is Glycerol kinase.